The sequence spans 99 residues: Co-chaperonin GroES (99 aa).

It belongs to the GroES chaperonin family. In terms of assembly, heptamer of 7 subunits arranged in a ring. Interacts with the chaperonin GroEL.

The protein localises to the cytoplasm. Together with the chaperonin GroEL, plays an essential role in assisting protein folding. The GroEL-GroES system forms a nano-cage that allows encapsulation of the non-native substrate proteins and provides a physical environment optimized to promote and accelerate protein folding. GroES binds to the apical surface of the GroEL ring, thereby capping the opening of the GroEL channel. In Corynebacterium kroppenstedtii (strain DSM 44385 / JCM 11950 / CIP 105744 / CCUG 35717), this protein is Co-chaperonin GroES.